We begin with the raw amino-acid sequence, 458 residues long: UDP-N-acetylmuramoylalanine--D-glutamate ligase (458 aa).

ATP is bound at residue 124-130 (GSDGKTT).

This sequence belongs to the MurCDEF family.

The protein resides in the cytoplasm. It carries out the reaction UDP-N-acetyl-alpha-D-muramoyl-L-alanine + D-glutamate + ATP = UDP-N-acetyl-alpha-D-muramoyl-L-alanyl-D-glutamate + ADP + phosphate + H(+). Its pathway is cell wall biogenesis; peptidoglycan biosynthesis. Cell wall formation. Catalyzes the addition of glutamate to the nucleotide precursor UDP-N-acetylmuramoyl-L-alanine (UMA). The sequence is that of UDP-N-acetylmuramoylalanine--D-glutamate ligase from Clostridium botulinum (strain 657 / Type Ba4).